The following is a 221-amino-acid chain: Epididymal secretory glutathione peroxidase (221 aa).

The N-terminal stretch at 1 to 21 (MAIQLRVFYLVPLLLASYVQT) is a signal peptide. Cys73 is an active-site residue.

Belongs to the glutathione peroxidase family. Epididymis.

Its subcellular location is the secreted. It catalyses the reaction 2 glutathione + H2O2 = glutathione disulfide + 2 H2O. Protects cells and enzymes from oxidative damage, by catalyzing the reduction of hydrogen peroxide, lipid peroxides and organic hydroperoxide, by glutathione. May constitute a glutathione peroxidase-like protective system against peroxide damage in sperm membrane lipids. In Rattus norvegicus (Rat), this protein is Epididymal secretory glutathione peroxidase (Gpx5).